A 459-amino-acid polypeptide reads, in one-letter code: uncharacterized protein (459 aa).

A TRAM domain is found at 2–60; sequence NLRVKQKIPLKIKRMGINGEGIGFYKRTLVFVPGALKGEEIFCQITSVKHNFVQARLLT. The [4Fe-4S] cluster site is built by Cys73, Cys79, Cys82, and Cys162. Residues Gln284, Tyr313, Asp334, and Asp382 each coordinate S-adenosyl-L-methionine. The Nucleophile role is filled by Cys409.

This sequence belongs to the class I-like SAM-binding methyltransferase superfamily. RNA M5U methyltransferase family.

This is an uncharacterized protein from Streptococcus mutans serotype c (strain ATCC 700610 / UA159).